The following is a 301-amino-acid chain: MKSEADNLQIVLITGMSGSGKSVALHALEDAGFFCVDNLPPELFLPFVALQKMHQTKRVAIAMDVRTASSLPLVPEQLATLQAQGVMVKSLFLDATTGTLVRRYSETRRKHPLSQAASEHSPLDQRRALVDAIELERELLADLRENAHVIDTSIIRPSKLQGYVKSLISTASEQLTLVFESFAFKRGIPGDADYVFDVRMLPNPHYEPELRQLTGRDLPVADFLKEQADVALMLEHIQKFLNQWLGALARDHRSYVTVAIGCTGGQHRSVYLVEKLAELFGDQWMTLKRHRELEASPLTLE.

15-22 (GMSGSGKS) provides a ligand contact to ATP. 64 to 67 (DVRT) is a GTP binding site.

Belongs to the RapZ-like family.

Displays ATPase and GTPase activities. The sequence is that of Nucleotide-binding protein Rfer_1653 from Albidiferax ferrireducens (strain ATCC BAA-621 / DSM 15236 / T118) (Rhodoferax ferrireducens).